Here is a 194-residue protein sequence, read N- to C-terminus: Putative manganese efflux pump MntP (194 aa).

The next 6 membrane-spanning stretches (helical) occupy residues 6–26 (LILV…GLAL), 35–55 (WLFA…GLYL), 66–86 (VAAI…LWEA), 109–129 (GVLG…LDAL), 142–162 (VPLT…LGLL), and 174–194 (RAEL…LVGV).

Belongs to the MntP (TC 9.B.29) family.

It is found in the cell membrane. Probably functions as a manganese efflux pump. The polypeptide is Putative manganese efflux pump MntP (Moorella thermoacetica (strain ATCC 39073 / JCM 9320)).